We begin with the raw amino-acid sequence, 609 residues long: Phosphoenolpyruvate carboxykinase [GTP] (609 aa).

Residues Arg-81 and 220-222 contribute to the substrate site; that span reads YGG. Mn(2+)-binding residues include Lys-229 and His-249. Ser-271 serves as a coordination point for substrate. 272–277 serves as a coordination point for GTP; that stretch reads ACGKTN. The active site involves Cys-273. Asp-296 contributes to the Mn(2+) binding site. A substrate-binding site is contributed by 387–389; it reads NSR. Residues Arg-389, Arg-420, and 515–518 each bind GTP; that span reads FGEN.

This sequence belongs to the phosphoenolpyruvate carboxykinase [GTP] family. In terms of assembly, monomer. Mn(2+) is required as a cofactor.

It is found in the cytoplasm. It catalyses the reaction oxaloacetate + GTP = phosphoenolpyruvate + GDP + CO2. It participates in carbohydrate biosynthesis; gluconeogenesis. Functionally, catalyzes the conversion of oxaloacetate (OAA) to phosphoenolpyruvate (PEP), the rate-limiting step in the metabolic pathway that produces glucose from lactate and other precursors derived from the citric acid cycle. The protein is Phosphoenolpyruvate carboxykinase [GTP] of Mycobacterium leprae (strain Br4923).